The sequence spans 420 residues: Na(+)/H(+) antiporter NhaA (420 aa).

11 consecutive transmembrane segments (helical) span residues 4–24, 70–90, 104–124, 132–152, 165–185, 192–212, 233–250, 299–319, 323–343, 361–381, and 395–415; these read VWNF…IALI, DLLM…AVIL, LVAT…IAYF, AVAN…YLVG, FLLL…AIFY, PAWL…ANWL, LSFW…YGFM, VEII…SAMG, WLVL…FGWL, LVVI…VASV, and GALF…LTQV.

This sequence belongs to the NhaA Na(+)/H(+) (TC 2.A.33) antiporter family.

The protein resides in the cell inner membrane. It catalyses the reaction Na(+)(in) + 2 H(+)(out) = Na(+)(out) + 2 H(+)(in). Na(+)/H(+) antiporter that extrudes sodium in exchange for external protons. This chain is Na(+)/H(+) antiporter NhaA, found in Jannaschia sp. (strain CCS1).